The sequence spans 891 residues: Putative alpha,alpha-trehalose-phosphate synthase [UDP-forming] 100 kDa subunit (891 aa).

Thr-88 is subject to Phosphothreonine. A disordered region spans residues 88–126; that stretch reads TGGSMTPGLGAMSPIPGSGRSSPLYTQPRSRATSPSRVR. Residues 106-124 are compositionally biased toward polar residues; it reads GRSSPLYTQPRSRATSPSR. Ser-108 and Ser-109 each carry phosphoserine. A glycosyltransferase region spans residues 132 to 613; that stretch reads AAPGIGAGAL…VTGFETKLKK (482 aa).

This sequence in the N-terminal section; belongs to the glycosyltransferase 20 family.

It carries out the reaction D-glucose 6-phosphate + UDP-alpha-D-glucose = alpha,alpha-trehalose 6-phosphate + UDP + H(+). This is Putative alpha,alpha-trehalose-phosphate synthase [UDP-forming] 100 kDa subunit from Schizosaccharomyces pombe (strain 972 / ATCC 24843) (Fission yeast).